Here is a 327-residue protein sequence, read N- to C-terminus: Glutaminase (327 aa).

Substrate is bound by residues Ser92, Asn143, Asn195, Tyr218, Tyr263, and Val281.

Belongs to the glutaminase family. Homotetramer.

It catalyses the reaction L-glutamine + H2O = L-glutamate + NH4(+). This is Glutaminase from Synechocystis sp. (strain ATCC 27184 / PCC 6803 / Kazusa).